The following is a 712-amino-acid chain: Saccharolysin (712 aa).

Position 73 is a phosphoserine (S73). Residue H501 coordinates Zn(2+). E502 is an active-site residue. Residues H505 and H508 each contribute to the Zn(2+) site.

Belongs to the peptidase M3 family. The cofactor is Zn(2+).

The protein localises to the cytoplasm. The enzyme catalyses Cleavage of Pro-|-Phe and Ala-|-Ala bonds.. Its function is as follows. Could be involved in late stage of protein degradation. The chain is Saccharolysin (PRD1) from Saccharomyces cerevisiae (strain ATCC 204508 / S288c) (Baker's yeast).